The chain runs to 646 residues: MQLGLSVSDSDASPFTPLAVLELAHDTKAEAIAWLLNRIRDKQRNGGAELLVDQLLFPAQDGQKPNPNVFVVGSTLQRLLSGAEDVGLFKEFQDGTMRGFTYANRESFKDFEGDGEGFLGDAECQYIVKHELDTLRAKNEEYIPGYPKYKLYPGKSIVRRLQSKGVLVQYFPLHNKEDLKRLSFSWYKKIKLSFQPLDDIRSYFGEGLGLYFGFLEYFTFALIPMALIGIPYYLFDWEDYDKYVLFAVFNLVWSTVFLEVWKRCSATLAYSWGTLGRKKAFEEPRAGFHGPLGLNPVTGREEPIYPSSKRHLRIYLVSVPFVLLCLYLSFYVMMVYFDMEFWAISIYHENPNFATSVLLFVPSIIYAVVIEIMNLLYRYAAEFLTDWENHRLESSFQNHLVPKVLVFNFVNCFASLFYIAFVMQDMVLLRQSLATLLITSQILNQVMEAFLPYWLQRRRNKRVYKRMRRLMGDKELPLLEQIQLETEMNTYLGTFDDYLEQFLLFGYVSLFSCVHPLAAVLVVLNNITEVYSDAFKMCHVFKRPFSEPAANIGVWQLAFETMSIIAVVTNCALIALSPQVKAYFPESDAQLILTVVAIEHVLLAFKFILAFVIPDVPKHIQVKLSKLDFESLEALKKRKILEVAET.

Transmembrane regions (helical) follow at residues 210–230 (LYFG…LIGI), 241–261 (DKYV…LEVW), 314–334 (IYLV…YVMM), 357–377 (VLLF…NLLY), 404–424 (VLVF…FVMQ), 502–522 (FLLF…AVLV), 557–577 (LAFE…IALS), and 592–612 (ILTV…LAFV).

Belongs to the anoctamin family.

The protein localises to the membrane. In terms of biological role, does not exhibit calcium-activated chloride channel (CaCC) activity. Can inhibit the activity of ANO1. This is Anoctamin-10 (ano10) from Danio rerio (Zebrafish).